The chain runs to 264 residues: Thymidylate synthase (264 aa).

Arg-21 provides a ligand contact to dUMP. His-51 contacts (6R)-5,10-methylene-5,6,7,8-tetrahydrofolate. 126–127 (RR) contacts dUMP. Cys-146 serves as the catalytic Nucleophile. DUMP-binding positions include 166-169 (RSAD), Asn-177, and 207-209 (HLY). Asp-169 contacts (6R)-5,10-methylene-5,6,7,8-tetrahydrofolate. A (6R)-5,10-methylene-5,6,7,8-tetrahydrofolate-binding site is contributed by Ala-263.

This sequence belongs to the thymidylate synthase family. Bacterial-type ThyA subfamily. Homodimer.

The protein localises to the cytoplasm. The enzyme catalyses dUMP + (6R)-5,10-methylene-5,6,7,8-tetrahydrofolate = 7,8-dihydrofolate + dTMP. It functions in the pathway pyrimidine metabolism; dTTP biosynthesis. In terms of biological role, catalyzes the reductive methylation of 2'-deoxyuridine-5'-monophosphate (dUMP) to 2'-deoxythymidine-5'-monophosphate (dTMP) while utilizing 5,10-methylenetetrahydrofolate (mTHF) as the methyl donor and reductant in the reaction, yielding dihydrofolate (DHF) as a by-product. This enzymatic reaction provides an intracellular de novo source of dTMP, an essential precursor for DNA biosynthesis. The sequence is that of Thymidylate synthase from Hahella chejuensis (strain KCTC 2396).